We begin with the raw amino-acid sequence, 554 residues long: Heterochromatin protein 1-binding protein 3 (554 aa).

At alanine 2 the chain carries N-acetylalanine. Serine 6 bears the Phosphoserine mark. Disordered regions lie at residues 30–136 and 142–161; these read LGEK…KTIP and SASQ…SPRP. At threonine 51 the chain carries Phosphothreonine. Acidic residues predominate over residues 60–71; it reads GEEEKPEPDGSS. Lysine 64 is covalently cross-linked (Glycyl lysine isopeptide (Lys-Gly) (interchain with G-Cter in SUMO2)). 2 positions are modified to phosphothreonine: glutamate 72 and threonine 85. Residues 72–93 are compositionally biased toward polar residues; that stretch reads EESISTVEEQENETPPATSSEA. Residues 94–129 show a composition bias toward basic and acidic residues; sequence EQPKGEPESGEKEENNNKSAEEPKKDEKDQSKEKEK. Lysine 97 is covalently cross-linked (Glycyl lysine isopeptide (Lys-Gly) (interchain with G-Cter in SUMO2)). Residues 142–156 are compositionally biased toward polar residues; the sequence is SASQLARAQRQTPMA. A phosphoserine mark is found at serine 144, serine 157, and serine 158. One can recognise an H15 1 domain in the interval 159-234; sequence PRPKMDAILT…GASGSFVVVQ (76 aa). Lysine 192 is modified (N6-acetyllysine). The disordered stretch occupies residues 229 to 254; that stretch reads SFVVVQKSKPPQKSKNRKKGSALDPE. The segment covering 238 to 248 has biased composition (basic residues); it reads PPQKSKNRKKG. The residue at position 249 (serine 249) is a Phosphoserine. The PxVxL motif signature appears at 255–259; sequence PQVKL. H15 domains lie at 255-330 and 337-413; these read PQVK…QLKK and LGGS…QLSF. Lysine 258 participates in a covalent cross-link: Glycyl lysine isopeptide (Lys-Gly) (interchain with G-Cter in SUMO2). The disordered stretch occupies residues 420-554; sequence GVLFPKKESG…AMKKSFKTKK (135 aa). Over residues 430–451 the composition is skewed to acidic residues; the sequence is GSDDEDEDDDDDESSEDSEDEE. 3 positions are modified to phosphoserine: serine 443, serine 444, and serine 447. A compositionally biased stretch (polar residues) spans 464-475; that stretch reads AKSQGKTASMKQ. Basic residues-rich tracts occupy residues 490 to 511 and 544 to 554; these read GKVR…RKAR and SAMKKSFKTKK.

As to quaternary structure, interacts (via PxVxL motif) with CBX5 (via Trp-174).

It is found in the nucleus. The protein resides in the chromosome. Component of heterochromatin that maintains heterochromatin integrity during G1/S progression and regulates the duration of G1 phase to critically influence cell proliferative capacity. May play a role in hypoxia-induced oncogenesis. This is Heterochromatin protein 1-binding protein 3 (Hp1bp3) from Mus musculus (Mouse).